We begin with the raw amino-acid sequence, 689 residues long: MSEKTFLVEIGTEELPPKALRSLAESFAANFTAELDNAGLAHGNVEWFAAPRRLALKVANLAESQPDREVEKRGPAIAQAFDAEGKPSKAAEGWARGCGITVDQAERLKTDKGEWLLYRAHVKGESTEALVPNMVATSLAKLPIPKLMRWGASDVHFVRPVHTVTLLLGDKVIPATILGIQSDRVIRGHRFMGEPEFTIDNADQYPQILLERGKVIADYEARKAKIKADAEEAARKIGGNADLSESLLEEVASLVEWPVVLTAKFEEKFLAVPAEALVYTMKGDQKYFPVYDNAGKLLPNFIFVANIESKDPTQIISGNEKVVRPRLADAEFFFNTDRKKRLEDHLPRLQTVLFQQQLGTLRDKTDRIQALAGWIAGQIGADVNHATRAGLLSKCDLMTNMVFEFTDTQGVMGMHYARHDGEAEDVAVALNEQYQPRFAGDDLPSNPVACALAIADKMDTLAGIFGIGQHPKGDKDPFALRRAALGVLRIIVEKNLALDLQTLTEEAVRLYGDKLTNANVVDDVIDFMLGRFRAWYQDEGYTVDTIQAVLARRPTRPADFDARMKAVSHFRTLEEASALAAANKRVSNILAKATEPLNDIVHASVLKEAAEIELARHLVVLRDKLQPYFADGRYQEALIELAALRAPVDEFFENVMVNAKEKDIRINRLTLLSKLRELFLQVADISLLQ.

Belongs to the class-II aminoacyl-tRNA synthetase family. As to quaternary structure, tetramer of two alpha and two beta subunits.

The protein resides in the cytoplasm. The catalysed reaction is tRNA(Gly) + glycine + ATP = glycyl-tRNA(Gly) + AMP + diphosphate. This is Glycine--tRNA ligase beta subunit from Salmonella paratyphi C (strain RKS4594).